Consider the following 603-residue polypeptide: UvrABC system protein C (603 aa).

Positions 15 to 92 (DQPGCYLMKD…IKKHDPRFNI (78 aa)) constitute a GIY-YIG domain. In terms of domain architecture, UVR spans 197 to 232 (KTVKNDLMKKMQEAAENMEFEKAGEFRDQINAIETT).

This sequence belongs to the UvrC family. In terms of assembly, interacts with UvrB in an incision complex.

It localises to the cytoplasm. Its function is as follows. The UvrABC repair system catalyzes the recognition and processing of DNA lesions. UvrC both incises the 5' and 3' sides of the lesion. The N-terminal half is responsible for the 3' incision and the C-terminal half is responsible for the 5' incision. The chain is UvrABC system protein C from Listeria monocytogenes serovar 1/2a (strain ATCC BAA-679 / EGD-e).